The sequence spans 625 residues: MNQLTNLSSAEISAQHEQDAKDLTRILPASKKVYIEGSRPDIQVPMREISLTDTPTGLGGEHNPPIMVYDTSGVYTDPNVQIDLNKGLPSVRQKWIEERNDTDVLSGLTSKFGQERLKDIRTADIRFAHIQNPRRAKAGKNVTQMHYAKQGIITPEMEYIAIRENQRQREAVDMRQHPGQNFGAKNLKEITPEFVRQEVAEGRAIIPANINHPELEPMIIGRNFLVKINANIGNSALGSSIDEEVAKMTWATRWGADTIMDLSTGKNIHETREWIIRNSPVPIGTVPIYQALEKVDGVAENLTWEIFKDTLIEQAEQGVDYFTIHAGVLLRYVPLTANRLTGIVSRGGSIMAQWCLAHHEENFLYTHFDEICEIMKAYDVSFSLGDGLRPGCIQDANDEAQFSELKTLGELTHRAWEHDVQVMIEGPGHVPMHMIKENMDLQLEVCKEAPFYTLGPLTTDIAPGYDHITSAIGAAMIGWYGTAMLCYVTPKEHLGLPNKKDVKDGIITYKIAAHAADLAKGHPGAQVRDNALSKARFEFRWDDQFNLSLDPDTARSMHDETLPKEAHKSAHFCSMCGPKFCSMKITQNVRDYANNLTNSDSEVEEGLKAMKEVYQEQGQKLYHKV.

Residues N231, M260, Y289, H325, 345–347 (SRG), 386–389 (DGLR), and E425 contribute to the substrate site. H429 lines the Zn(2+) pocket. Y452 lines the substrate pocket. H493 is a binding site for Zn(2+). [4Fe-4S] cluster is bound by residues C573, C576, and C581.

The protein belongs to the ThiC family. In terms of assembly, homodimer. It depends on [4Fe-4S] cluster as a cofactor.

The enzyme catalyses 5-amino-1-(5-phospho-beta-D-ribosyl)imidazole + S-adenosyl-L-methionine = 4-amino-2-methyl-5-(phosphooxymethyl)pyrimidine + CO + 5'-deoxyadenosine + formate + L-methionine + 3 H(+). It functions in the pathway cofactor biosynthesis; thiamine diphosphate biosynthesis. Its function is as follows. Catalyzes the synthesis of the hydroxymethylpyrimidine phosphate (HMP-P) moiety of thiamine from aminoimidazole ribotide (AIR) in a radical S-adenosyl-L-methionine (SAM)-dependent reaction. This Acinetobacter baumannii (strain AB0057) protein is Phosphomethylpyrimidine synthase.